The following is a 356-amino-acid chain: DNA polymerase IV (356 aa).

A UmuC domain is found at 6–187 (IIHVDMDYFF…LDIGDFPGVG (182 aa)). Mg(2+) is bound by residues Asp-10 and Asp-105. The active site involves Glu-106.

The protein belongs to the DNA polymerase type-Y family. Monomer. The cofactor is Mg(2+).

Its subcellular location is the cytoplasm. It catalyses the reaction DNA(n) + a 2'-deoxyribonucleoside 5'-triphosphate = DNA(n+1) + diphosphate. Functionally, poorly processive, error-prone DNA polymerase involved in untargeted mutagenesis. Copies undamaged DNA at stalled replication forks, which arise in vivo from mismatched or misaligned primer ends. These misaligned primers can be extended by PolIV. Exhibits no 3'-5' exonuclease (proofreading) activity. May be involved in translesional synthesis, in conjunction with the beta clamp from PolIII. In Staphylococcus saprophyticus subsp. saprophyticus (strain ATCC 15305 / DSM 20229 / NCIMB 8711 / NCTC 7292 / S-41), this protein is DNA polymerase IV.